Consider the following 55-residue polypeptide: Large ribosomal subunit protein bL33 (55 aa).

It belongs to the bacterial ribosomal protein bL33 family.

The polypeptide is Large ribosomal subunit protein bL33 (Burkholderia ambifaria (strain MC40-6)).